A 258-amino-acid polypeptide reads, in one-letter code: (7aS)-7a-methyl-1,5-dioxo-2,3,5,6,7,7a-hexahydro-1H-indene-carboxyl-CoA hydrolase (258 aa).

Belongs to the enoyl-CoA hydratase/isomerase family.

The enzyme catalyses (7aS)-7a-methyl-1,5-dioxo-2,3,5,6,7,7a-hexahydro-1H-indene-carboxyl-CoA + H2O = (3E)-2-(2-carboxylatoethyl)-3-methyl-6-oxocyclohex-1-ene-1-carboxyl-CoA + H(+). It participates in steroid metabolism; cholesterol degradation. Involved in the final steps of cholesterol and steroid degradation. Catalyzes the hydrolytic ring D opening of (7aS)-7a-methyl-1,5-dioxo-2,3,5,6,7,7a-hexahydro-1H-indene-carboxyl-CoA (HIEC-CoA) to (3E)-2-(2-carboxylatoethyl)-3-methyl-6-oxocyclohex-1-ene-1-carboxyl-CoA (COCHEA-CoA). This chain is (7aS)-7a-methyl-1,5-dioxo-2,3,5,6,7,7a-hexahydro-1H-indene-carboxyl-CoA hydrolase, found in Rhodococcus jostii (strain RHA1).